The following is a 184-amino-acid chain: CKLF-like MARVEL transmembrane domain-containing protein 3 (184 aa).

Positions 1 to 12 (MWPPDAEPEPDP) are enriched in acidic residues. The interval 1–22 (MWPPDAEPEPDPESAHGPRSGR) is disordered. Positions 36–155 (FLCSLKGRLL…DFYLIFNEVA (120 aa)) constitute an MARVEL domain. 3 consecutive transmembrane segments (helical) span residues 64–84 (ASAF…FLFA), 96–116 (LCWP…YFVI), and 131–151 (AAGV…YLIF). Residues 163-184 (SGNETTAHRTEEENSNSDSDSD) are disordered. The span at 175-184 (ENSNSDSDSD) shows a compositional bias: acidic residues.

Belongs to the chemokine-like factor family.

The protein localises to the membrane. The polypeptide is CKLF-like MARVEL transmembrane domain-containing protein 3 (Cmtm3) (Mus musculus (Mouse)).